The chain runs to 738 residues: MKEAKIENIDFGNALSERYLAYALSTIMSRSLPDVRDGLKPVHRRLLYAMLQLRLEPNSGYKKCARVVGDVIGKYHPHGDVAVYDTLVRLAQHFSLRYPLIDGQGNFGSIDGDNAAAMRYTESRMTEICMLLMEDIDKDTVDFRSTYDDSDLEPVIMPASFPNLLANGSEGIAVGMATNIPPHNLHELCDALLYLIDNPQAGINDIMNFIKGPDFPTGGIIIDKAEVINAAYTTGRGSFRVRSRWEKEELSYGTYQIVVTEIPYQIQKSKLIEQIAILLKDKKIPLISSIRDESTDIIRVVIEPRDRSCDPQIVMESLFKLTNLESRIQLNMNVIGSNNVPRVMNILEILQEFLVHRKNIIIRRSTYLLNKIKQRLEILKVLRIVYLNLDEIIEIIREEDEPKTIIMERFKISAIQVEVILNTRLRSLQKLEEHAIIDEHSNLQKQQAILEKILKNHKELWQIVKKEIKAVQTKFGLNTIIGARRTSFEEVDLTNQVVDITAFITKEPITIICSKMGWVRSLKGHNTDLSTIKYKEGDTEKFIIEAYTTDKILIISSKGRFFTLLADNISKGKGTGGVSIKLLVDIGNNDITNILVYKPNQLLLLASSIGKGFLVNSNEVIAQTKTGKQIMNIPEGYSCIACLPVNGDSIACIGESRRLLVFNIDEIPEMKKGQGVVLQRFKNAKLLDIKIFNKQDGLSWNDGTKIQLEKNIVAFLGKRGGFGTFPPIGFPKNNRFSP.

In terms of domain architecture, Topo IIA-type catalytic spans Leu-32 to Gln-496. The O-(5'-phospho-DNA)-tyrosine intermediate role is filled by Tyr-120.

Belongs to the type II topoisomerase GyrA/ParC subunit family. ParC type 1 subfamily. Heterotetramer composed of ParC and ParE.

It is found in the cell membrane. The catalysed reaction is ATP-dependent breakage, passage and rejoining of double-stranded DNA.. In terms of biological role, topoisomerase IV is essential for chromosome segregation. It relaxes supercoiled DNA. Performs the decatenation events required during the replication of a circular DNA molecule. The chain is DNA topoisomerase 4 subunit A from Rickettsia prowazekii (strain Madrid E).